The following is a 174-amino-acid chain: ATP-dependent protease subunit HslV (174 aa).

Thr-2 is an active-site residue. Positions 157, 160, and 163 each coordinate Na(+).

The protein belongs to the peptidase T1B family. HslV subfamily. In terms of assembly, a double ring-shaped homohexamer of HslV is capped on each side by a ring-shaped HslU homohexamer. The assembly of the HslU/HslV complex is dependent on binding of ATP.

Its subcellular location is the cytoplasm. It carries out the reaction ATP-dependent cleavage of peptide bonds with broad specificity.. Allosterically activated by HslU binding. Protease subunit of a proteasome-like degradation complex believed to be a general protein degrading machinery. The chain is ATP-dependent protease subunit HslV from Shewanella pealeana (strain ATCC 700345 / ANG-SQ1).